The following is a 165-amino-acid chain: Large ribosomal subunit protein uL10 (165 aa).

Belongs to the universal ribosomal protein uL10 family. In terms of assembly, part of the ribosomal stalk of the 50S ribosomal subunit. The N-terminus interacts with L11 and the large rRNA to form the base of the stalk. The C-terminus forms an elongated spine to which L12 dimers bind in a sequential fashion forming a multimeric L10(L12)X complex.

Its function is as follows. Forms part of the ribosomal stalk, playing a central role in the interaction of the ribosome with GTP-bound translation factors. The polypeptide is Large ribosomal subunit protein uL10 (Burkholderia ambifaria (strain MC40-6)).